We begin with the raw amino-acid sequence, 763 residues long: Lysine-specific histone demethylase 1 homolog 2 (763 aa).

In terms of domain architecture, SWIRM spans 53–152 (QRETETEALI…FGVSAAFPAS (100 aa)). Glu192, Arg194, Arg200, and Glu571 together coordinate FAD.

It belongs to the flavin monoamine oxidase family. Requires FAD as cofactor.

In terms of biological role, probable histone demethylase. This chain is Lysine-specific histone demethylase 1 homolog 2, found in Oryza sativa subsp. japonica (Rice).